The sequence spans 504 residues: 6,7,8-trihydroxycoumarin synthase (504 aa).

A helical membrane pass occupies residues 1–21 (MEPVFLFLILAFPIASVYLLF). Residues 363-368 (PAPVLV) are substrate specificity. Cysteine 444 provides a ligand contact to heme.

It belongs to the cytochrome P450 family. It depends on heme as a cofactor.

The protein resides in the microsome membrane. The protein operates within secondary metabolite biosynthesis. In terms of biological role, involved in the biosynthesis of coumarins and furanocoumarins (FCs), natural products required for defense responses against attacks by predators with potential medical and agroindustrial usages such as anticoagulant, rodenticide and artificial vanilla substitutes. Able to catalyze the hydroxylation of esculetin to produce 6,7,8-trihydroxycoumarin. In Pastinaca sativa (Wild parsnip), this protein is 6,7,8-trihydroxycoumarin synthase.